We begin with the raw amino-acid sequence, 317 residues long: Osteopontin (317 aa).

The signal sequence occupies residues 1-16; it reads MRLAVVCFCLFGLASC. Residues S26, S27, S60, S62, and S63 each carry the phosphoserine modification. The segment at 43–297 is disordered; it reads WLKPDPSQKQ…LVLDPKSKED (255 aa). Residues 49–63 show a composition bias toward polar residues; the sequence is SQKQNLLAPQNSVSS. Residue T66 is modified to Phosphothreonine. 8 positions are modified to phosphoserine: S76, S78, S81, S106, S109, S112, S115, and S118. A compositionally biased stretch (acidic residues) spans 86–110; sequence DDDDDDDDDGDHAESEDSVNSDESD. 3 O-linked (GalNAc...) threonine glycosylation sites follow: T123, T132, and T137. Positions 144–146 match the Cell attachment site motif; the sequence is RGD. Phosphothreonine is present on residues T170 and T175. Positions 174-187 are enriched in basic and acidic residues; it reads LTSRMKSQESDEAI. 7 positions are modified to phosphoserine: S176, S180, S200, S204, S209, S213, and S219. Positions 197-216 are enriched in polar residues; the sequence is SVPSDQDSNGKTSHESSQLD. Residue S219 is glycosylated (O-linked (Xyl...) (chondroitin sulfate) serine). T222 is modified (phosphothreonine). 2 stretches are compositionally biased toward basic and acidic residues: residues 223–240 and 248–263; these read HSLE…HEST and SAEK…RSDA. S224, S228, S257, S261, S266, S270, S273, S278, S283, S294, S306, S311, S313, and S314 each carry phosphoserine. Positions 273 to 297 are enriched in basic and acidic residues; that stretch reads SLEHQSHEFHSHEDKLVLDPKSKED. Residue S311 is glycosylated (O-linked (Xyl...) (chondroitin sulfate) serine).

The protein belongs to the osteopontin family. Interacts (via N-terminus) with integrin ITGA9:ITGB1. Extensively phosphorylated by FAM20C in the extracellular medium at multiple sites within the S-x-E/pS motif. The phosphorylated form inhibits hydroxyapatite crystallization. Dephosphorylation via a mechanism involving ALPL/TNAP promotes hydroxyapatite crystallization. Post-translationally, O-glycosylated. In terms of processing, forms covalent cross-links mediated by transglutaminase TGM2, between a glutamine and the epsilon-amino group of a lysine residue, forming homopolymers and heteropolymers, increasing its collagen binding properties.

The protein resides in the secreted. Major non-collagenous bone protein that binds tightly to hydroxyapatite. Appears to form an integral part of the mineralized matrix. Probably important to cell-matrix interaction. Its function is as follows. Acts as a cytokine involved in enhancing production of interferon-gamma and interleukin-12 and reducing production of interleukin-10 and is essential in the pathway that leads to type I immunity. The sequence is that of Osteopontin (Spp1) from Rattus norvegicus (Rat).